The primary structure comprises 161 residues: DNA-directed RNA polymerase 18 kDa subunit (161 aa).

This sequence belongs to the poxviridae DNA-directed RNA polymerase 18 kDa subunit family. As to quaternary structure, the DNA-dependent RNA polymerase used for intermediate and late genes expression consists of eight subunits 147 kDa, 133 kDa, 35 kDa, 30 kDa, 22 kDa, 19 kDa, 18 kDa and 7 kDa totalling more than 500 kDa in mass. The same holoenzyme, with the addition of the transcription-specificity factor RAP94, is used for early gene expression.

Its subcellular location is the virion. The enzyme catalyses RNA(n) + a ribonucleoside 5'-triphosphate = RNA(n+1) + diphosphate. Its function is as follows. Part of the DNA-dependent RNA polymerase which catalyzes the transcription of viral DNA into RNA using the four ribonucleoside triphosphates as substrates. Responsible for the transcription of early, intermediate and late genes. DNA-dependent RNA polymerase associates with the early transcription factor (ETF) thereby allowing the early genes transcription. Late transcription, and probably also intermediate transcription, require newly synthesized RNA polymerase. This chain is DNA-directed RNA polymerase 18 kDa subunit (RPO18), found in Vertebrata (FPV).